Reading from the N-terminus, the 447-residue chain is Probable glycine dehydrogenase (decarboxylating) subunit 1 (447 aa).

The protein belongs to the GcvP family. N-terminal subunit subfamily. In terms of assembly, the glycine cleavage system is composed of four proteins: P, T, L and H. In this organism, the P 'protein' is a heterodimer of two subunits.

The catalysed reaction is N(6)-[(R)-lipoyl]-L-lysyl-[glycine-cleavage complex H protein] + glycine + H(+) = N(6)-[(R)-S(8)-aminomethyldihydrolipoyl]-L-lysyl-[glycine-cleavage complex H protein] + CO2. Its function is as follows. The glycine cleavage system catalyzes the degradation of glycine. The P protein binds the alpha-amino group of glycine through its pyridoxal phosphate cofactor; CO(2) is released and the remaining methylamine moiety is then transferred to the lipoamide cofactor of the H protein. The polypeptide is Probable glycine dehydrogenase (decarboxylating) subunit 1 (Beijerinckia indica subsp. indica (strain ATCC 9039 / DSM 1715 / NCIMB 8712)).